The following is a 75-amino-acid chain: uncharacterized protein (75 aa).

A helical membrane pass occupies residues 44-64 (IINMIVIWAALIALFVKLYIL).

Its subcellular location is the host membrane. This is an uncharacterized protein from Ostreid herpesvirus 1 (isolate France) (OsHV-1).